We begin with the raw amino-acid sequence, 500 residues long: Phenylalanine--tRNA ligase alpha subunit (500 aa).

L-phenylalanine-binding positions include Thr-343, 382–384 (QVD), and Phe-423. Mg(2+) is bound at residue Glu-425. Position 448 (Phe-448) interacts with L-phenylalanine.

Belongs to the class-II aminoacyl-tRNA synthetase family. Phe-tRNA synthetase alpha subunit type 2 subfamily. Tetramer of two alpha and two beta subunits. Requires Mg(2+) as cofactor.

The protein resides in the cytoplasm. The catalysed reaction is tRNA(Phe) + L-phenylalanine + ATP = L-phenylalanyl-tRNA(Phe) + AMP + diphosphate + H(+). The polypeptide is Phenylalanine--tRNA ligase alpha subunit (Thermococcus onnurineus (strain NA1)).